We begin with the raw amino-acid sequence, 195 residues long: MAFVLSLLMALVLVSYGPGGSLGCYLSQRLMLDARENLRLLDRMNRLSPHSCLQDRKDFGLPQEMVEGDQLQEDQAFPVLYEMLQQSFNLFYTEHSSAAWDTTLLDQLCTGLQQQLEDLDTCRGQVMGEEDSELGNMDPIVTVKKYFQGIYDYLQEKGYSDCAWEIVRVEMMRALTSSTTLQKRLTKTGGDLNSP.

The signal sequence occupies residues 1–23 (MAFVLSLLMALVLVSYGPGGSLG). Cystine bridges form between Cys-24–Cys-122 and Cys-52–Cys-162.

Belongs to the alpha/beta interferon family. IFN-alphaII subfamily. As to expression, constitutively and exclusively expressed in the mononuclear cells of the extraembryonic trophectoderm.

The protein localises to the secreted. In terms of biological role, paracrine hormone primarily responsible for maternal recognition of pregnancy. Interacts with endometrial receptors, probably type I interferon receptors, and blocks estrogen receptor expression, preventing the estrogen-induced increase in oxytocin receptor expression in the endometrium. This results in the suppression of the pulsatile endometrial release of the luteolytic hormone prostaglandin F2-alpha, hindering the regression of the corpus luteum (luteolysis) and therefore a return to ovarian cyclicity. This, and a possible direct effect of IFN-tau on prostaglandin synthesis, leads in turn to continued ovarian progesterone secretion, which stimulates the secretion by the endometrium of the nutrients required for the growth of the conceptus. In summary, displays particularly high antiviral and antiproliferative potency concurrently with particular weak cytotoxicity, high antiluteolytic activity and immunomodulatory properties. In contrast with other IFNs, IFN-tau is not virally inducible. This Ovis aries (Sheep) protein is Interferon tau-8 (IFNT8).